The sequence spans 341 residues: tRNA uridine(34) hydroxylase (341 aa).

The 95-residue stretch at 139-233 (SDPEVVLVDT…YLEEVPSTET (95 aa)) folds into the Rhodanese domain. Catalysis depends on Cys-193, which acts as the Cysteine persulfide intermediate. 2 stretches are compositionally biased toward basic and acidic residues: residues 306-316 (SLAEERGESHI) and 324-341 (IEER…QANK). Positions 306-341 (SLAEERGESHIGGDIQNIIEERRQEKNDKKAKQANK) are disordered.

Belongs to the TrhO family.

The catalysed reaction is uridine(34) in tRNA + AH2 + O2 = 5-hydroxyuridine(34) in tRNA + A + H2O. Catalyzes oxygen-dependent 5-hydroxyuridine (ho5U) modification at position 34 in tRNAs. The protein is tRNA uridine(34) hydroxylase of Colwellia psychrerythraea (strain 34H / ATCC BAA-681) (Vibrio psychroerythus).